Here is a 342-residue protein sequence, read N- to C-terminus: MAKIYYDDDADLSIIQNRQVAVIGYGSQGHAHALNLRDSGVDVRVGLRDGSSSIAKAEAQGLRVLSIEDACEEADLIMVLVPDQNQRQLYAEHIAPHLKDGDALFFAHGFNVHFGYIKAPQGVDVCMVAPKGPGHIVRREYSDGRGVPVLVCVEQDASGIAWDLTRSYAKALGGLRAGGIETSFREETETDLFGEQAVLCGGLSHLIQAGFETLVTAGYQPEMAYFEVCHEMKMIVDLIIEGGISKLRWSISDTAEYGDYVSGPRVIDDHVKKNMKAVLDDIQNGAFAKRFIADQDAGAPQSKKFREGEAKHPIEATGKELRKMYSWLAAADDDYTEGSVAR.

One can recognise a KARI N-terminal Rossmann domain in the interval 2–182 (AKIYYDDDAD…GGLRAGGIET (181 aa)). Residues 25 to 28 (YGSQ), arginine 48, serine 51, serine 53, and 83 to 86 (DQNQ) contribute to the NADP(+) site. Histidine 108 is a catalytic residue. An NADP(+)-binding site is contributed by glycine 134. Positions 183–328 (SFREETETDL…KELRKMYSWL (146 aa)) constitute a KARI C-terminal knotted domain. Mg(2+) is bound by residues aspartate 191, glutamate 195, glutamate 227, and glutamate 231. Position 252 (serine 252) interacts with substrate.

This sequence belongs to the ketol-acid reductoisomerase family. The cofactor is Mg(2+).

The catalysed reaction is (2R)-2,3-dihydroxy-3-methylbutanoate + NADP(+) = (2S)-2-acetolactate + NADPH + H(+). It catalyses the reaction (2R,3R)-2,3-dihydroxy-3-methylpentanoate + NADP(+) = (S)-2-ethyl-2-hydroxy-3-oxobutanoate + NADPH + H(+). The protein operates within amino-acid biosynthesis; L-isoleucine biosynthesis; L-isoleucine from 2-oxobutanoate: step 2/4. It functions in the pathway amino-acid biosynthesis; L-valine biosynthesis; L-valine from pyruvate: step 2/4. Involved in the biosynthesis of branched-chain amino acids (BCAA). Catalyzes an alkyl-migration followed by a ketol-acid reduction of (S)-2-acetolactate (S2AL) to yield (R)-2,3-dihydroxy-isovalerate. In the isomerase reaction, S2AL is rearranged via a Mg-dependent methyl migration to produce 3-hydroxy-3-methyl-2-ketobutyrate (HMKB). In the reductase reaction, this 2-ketoacid undergoes a metal-dependent reduction by NADPH to yield (R)-2,3-dihydroxy-isovalerate. This chain is Ketol-acid reductoisomerase (NADP(+)), found in Cutibacterium acnes (strain DSM 16379 / KPA171202) (Propionibacterium acnes).